Here is a 513-residue protein sequence, read N- to C-terminus: 2,3-bisphosphoglycerate-independent phosphoglycerate mutase (513 aa).

2 residues coordinate Mn(2+): Asp12 and Ser62. The active-site Phosphoserine intermediate is Ser62. Residues His123, 153–154 (RD), Arg185, Arg191, 260–263 (RPDR), and Lys333 each bind substrate. Residues Asp400, His404, Asp441, His442, and His460 each contribute to the Mn(2+) site.

Belongs to the BPG-independent phosphoglycerate mutase family. As to quaternary structure, monomer. Mn(2+) serves as cofactor.

It carries out the reaction (2R)-2-phosphoglycerate = (2R)-3-phosphoglycerate. It functions in the pathway carbohydrate degradation; glycolysis; pyruvate from D-glyceraldehyde 3-phosphate: step 3/5. In terms of biological role, catalyzes the interconversion of 2-phosphoglycerate and 3-phosphoglycerate. The protein is 2,3-bisphosphoglycerate-independent phosphoglycerate mutase of Clostridium tetani (strain Massachusetts / E88).